A 480-amino-acid chain; its full sequence is Proline--tRNA ligase (480 aa).

It belongs to the class-II aminoacyl-tRNA synthetase family. ProS type 3 subfamily. In terms of assembly, homodimer.

It localises to the cytoplasm. It carries out the reaction tRNA(Pro) + L-proline + ATP = L-prolyl-tRNA(Pro) + AMP + diphosphate. Functionally, catalyzes the attachment of proline to tRNA(Pro) in a two-step reaction: proline is first activated by ATP to form Pro-AMP and then transferred to the acceptor end of tRNA(Pro). The protein is Proline--tRNA ligase of Mycobacterium leprae (strain Br4923).